A 790-amino-acid polypeptide reads, in one-letter code: Cadherin-6 (790 aa).

Positions 1 to 18 are cleaved as a signal peptide; it reads MRTYRYFLLLFWVGQPYP. The propeptide occupies 19–53; that stretch reads TLSTPLSKRTSGFPAKKRALELSGNSKNELNRSKR. A glycan (N-linked (GlcNAc...) asparagine) is linked at Asn49. Cadherin domains follow at residues 54–159, 160–268, 269–383, 384–486, and 487–608; these read SWMW…EPIF, TKEV…PPRF, PQST…PPVF, SKLA…DNAP, and EFAE…LIHP. The Extracellular segment spans residues 54 to 615; it reads SWMWNQFFLL…IHPTGLSTGA (562 aa). N-linked (GlcNAc...) asparagine glycosylation is present at Asn255. The segment at 259–288 is disordered; it reads TDVNDNPPRFPQSTYQFKTPESSPPGTPIG. Residues 269-279 are compositionally biased toward polar residues; sequence PQSTYQFKTPE. Residues Asn399, Asn437, Asn455, and Asn536 are each glycosylated (N-linked (GlcNAc...) asparagine). The chain crosses the membrane as a helical span at residues 616-636; sequence LVAILLCIVILLVTVVLFAAL. Over 637-790 the chain is Cytoplasmic; sequence RRQRKKEPLI…YGGVDSDKDS (154 aa). Phosphoserine is present on residues Ser786 and Ser790.

In terms of tissue distribution, highly expressed in brain, cerebellum, and kidney. Lung, pancreas, and gastric mucosa show a weak expression. Also expressed in certain liver and kidney carcinomas.

Its subcellular location is the cell membrane. Its function is as follows. Cadherins are calcium-dependent cell adhesion proteins. They preferentially interact with themselves in a homophilic manner in connecting cells; cadherins may thus contribute to the sorting of heterogeneous cell types. The polypeptide is Cadherin-6 (CDH6) (Homo sapiens (Human)).